A 96-amino-acid polypeptide reads, in one-letter code: Co-chaperonin GroES (96 aa).

This sequence belongs to the GroES chaperonin family. As to quaternary structure, heptamer of 7 subunits arranged in a ring. Interacts with the chaperonin GroEL.

It is found in the cytoplasm. In terms of biological role, together with the chaperonin GroEL, plays an essential role in assisting protein folding. The GroEL-GroES system forms a nano-cage that allows encapsulation of the non-native substrate proteins and provides a physical environment optimized to promote and accelerate protein folding. GroES binds to the apical surface of the GroEL ring, thereby capping the opening of the GroEL channel. The polypeptide is Co-chaperonin GroES (Shewanella amazonensis (strain ATCC BAA-1098 / SB2B)).